Reading from the N-terminus, the 327-residue chain is Phenylalanine--tRNA ligase alpha subunit (327 aa).

Mg(2+) is bound at residue E252.

This sequence belongs to the class-II aminoacyl-tRNA synthetase family. Phe-tRNA synthetase alpha subunit type 1 subfamily. Tetramer of two alpha and two beta subunits. It depends on Mg(2+) as a cofactor.

The protein localises to the cytoplasm. It catalyses the reaction tRNA(Phe) + L-phenylalanine + ATP = L-phenylalanyl-tRNA(Phe) + AMP + diphosphate + H(+). The sequence is that of Phenylalanine--tRNA ligase alpha subunit from Aliivibrio fischeri (strain ATCC 700601 / ES114) (Vibrio fischeri).